The primary structure comprises 294 residues: MYB-like transcription factor ODO1 (294 aa).

HTH myb-type domains follow at residues 9–61 (KLGV…TNYL) and 62–116 (RPDL…KKKL). 2 DNA-binding regions (H-T-H motif) span residues 37–61 (WRAV…TNYL) and 89–112 (WSKI…NTHI). Disordered regions lie at residues 128–152 (PLKK…NGHQ) and 171–191 (TEFD…NSSC).

Restricted to the petals, with the highest expression in the limb, probably in both epidermal and mesophyll cell layers.

It is found in the nucleus. Functionally, R2R3 MYB-type transcription factor controlling the production of volatile organic compounds (VOCs), including floral volatile benzenoids and phenylpropanoids (FVBP), in flowers of fragrant cultivars (e.g. cv. Mitchell and cv. V26) by regulating the shikimate pathway, via the activation of several genes (e.g. EPSPS, ADT1, PAL1, CFAT and CCoAOMT1). This scent, mostly produced in the evening and night by the petals, attracts the pollinators (e.g. the night-active hawkmoth pollinator Manduca sexta). Promotes the expression of ABCG1 in petals three hours before the onset of volatile scent emission. Anthocyanins production is not controlled by ODO1 as color and scent are produced at different stages of development. Seems to trigger a negative feed-back loop that represses the expression of EOBI. This chain is MYB-like transcription factor ODO1, found in Petunia hybrida (Petunia).